The following is a 1538-amino-acid chain: Ferredoxin-dependent glutamate synthase (1538 aa).

C34 acts as the For GATase activity in catalysis. Residues 34–431 (CGVGFIADVN…PGQMISVDIF (398 aa)) enclose the Glutamine amidotransferase type-2 domain. Position 1109–1166 (1109–1166 (LSEVHQLLAENQLRDRVTLRVDGGLRTGSDIVLAAIMGAEEFGFGTVAMIATGCIMAR)) interacts with FMN. [3Fe-4S] cluster contacts are provided by C1162, C1168, and C1173.

This sequence belongs to the glutamate synthase family. Monomer. [3Fe-4S] cluster is required as a cofactor. FAD serves as cofactor. The cofactor is FMN.

Its subcellular location is the plastid. The protein resides in the chloroplast stroma. It catalyses the reaction 2 oxidized [2Fe-2S]-[ferredoxin] + 2 L-glutamate = L-glutamine + 2 reduced [2Fe-2S]-[ferredoxin] + 2-oxoglutarate + 2 H(+). It participates in amino-acid biosynthesis; L-glutamate biosynthesis via GLT pathway; L-glutamate from 2-oxoglutarate and L-glutamine (ferredoxin route): step 1/1. The protein operates within energy metabolism; nitrogen metabolism. The chain is Ferredoxin-dependent glutamate synthase (gltB) from Pyropia yezoensis (Susabi-nori).